Here is a 140-residue protein sequence, read N- to C-terminus: Nucleoside diphosphate kinase (140 aa).

Positions 11, 59, 87, 93, 104, and 114 each coordinate ATP. H117 (pros-phosphohistidine intermediate) is an active-site residue.

This sequence belongs to the NDK family. In terms of assembly, homotetramer. The cofactor is Mg(2+).

It localises to the cytoplasm. It catalyses the reaction a 2'-deoxyribonucleoside 5'-diphosphate + ATP = a 2'-deoxyribonucleoside 5'-triphosphate + ADP. The enzyme catalyses a ribonucleoside 5'-diphosphate + ATP = a ribonucleoside 5'-triphosphate + ADP. Major role in the synthesis of nucleoside triphosphates other than ATP. The ATP gamma phosphate is transferred to the NDP beta phosphate via a ping-pong mechanism, using a phosphorylated active-site intermediate. The chain is Nucleoside diphosphate kinase from Mesorhizobium japonicum (strain LMG 29417 / CECT 9101 / MAFF 303099) (Mesorhizobium loti (strain MAFF 303099)).